The following is a 339-amino-acid chain: Phenylalanine--tRNA ligase alpha subunit (339 aa).

A Mg(2+)-binding site is contributed by glutamate 254.

This sequence belongs to the class-II aminoacyl-tRNA synthetase family. Phe-tRNA synthetase alpha subunit type 1 subfamily. In terms of assembly, tetramer of two alpha and two beta subunits. It depends on Mg(2+) as a cofactor.

The protein localises to the cytoplasm. It catalyses the reaction tRNA(Phe) + L-phenylalanine + ATP = L-phenylalanyl-tRNA(Phe) + AMP + diphosphate + H(+). The polypeptide is Phenylalanine--tRNA ligase alpha subunit (Clostridium novyi (strain NT)).